The sequence spans 374 residues: Putative F-box protein At5g60060 (374 aa).

Residues 9-61 enclose the F-box domain; the sequence is SQWSDLPLDILELISDRLDHDSSDTIHLLCLRSVCATWRLSLPLSNKNNRLSK.

In Arabidopsis thaliana (Mouse-ear cress), this protein is Putative F-box protein At5g60060.